The following is a 187-amino-acid chain: UPF0340 protein SP70585_0722 (187 aa).

This sequence belongs to the UPF0340 family.

The sequence is that of UPF0340 protein SP70585_0722 from Streptococcus pneumoniae (strain 70585).